Consider the following 178-residue polypeptide: Ribosome maturation factor RimP (178 aa).

The protein belongs to the RimP family.

It localises to the cytoplasm. In terms of biological role, required for maturation of 30S ribosomal subunits. The chain is Ribosome maturation factor RimP from Streptococcus pyogenes serotype M18 (strain MGAS8232).